We begin with the raw amino-acid sequence, 295 residues long: 33 kDa chaperonin (295 aa).

Cystine bridges form between cysteine 237–cysteine 239 and cysteine 270–cysteine 273.

The protein belongs to the HSP33 family. In terms of processing, under oxidizing conditions two disulfide bonds are formed involving the reactive cysteines. Under reducing conditions zinc is bound to the reactive cysteines and the protein is inactive.

The protein resides in the cytoplasm. Functionally, redox regulated molecular chaperone. Protects both thermally unfolding and oxidatively damaged proteins from irreversible aggregation. Plays an important role in the bacterial defense system toward oxidative stress. The protein is 33 kDa chaperonin of Symbiobacterium thermophilum (strain DSM 24528 / JCM 14929 / IAM 14863 / T).